Consider the following 440-residue polypeptide: Xylose isomerase (440 aa).

Catalysis depends on residues histidine 101 and aspartate 104. Mg(2+)-binding residues include glutamate 232, glutamate 268, histidine 271, aspartate 296, aspartate 307, aspartate 309, and aspartate 339.

The protein belongs to the xylose isomerase family. Homotetramer. It depends on Mg(2+) as a cofactor.

The protein localises to the cytoplasm. It catalyses the reaction alpha-D-xylose = alpha-D-xylulofuranose. The polypeptide is Xylose isomerase (Salmonella agona (strain SL483)).